A 783-amino-acid chain; its full sequence is BMP/retinoic acid-inducible neural-specific protein 2 (783 aa).

Residues 1-33 (MRWQCGTRFRGLRPVVAPWTALLALGLPGWVLA) form the signal peptide. Residues 85-281 (RYRIYREFAR…FVAAALSYIT (197 aa)) form the MACPF domain. N-linked (GlcNAc...) asparagine glycans are attached at residues Asn-185, Asn-354, Asn-473, Asn-579, Asn-626, and Asn-658.

Belongs to the BRINP family.

The protein localises to the secreted. Its function is as follows. Inhibits neuronal cell proliferation by negative regulation of the cell cycle transition. The polypeptide is BMP/retinoic acid-inducible neural-specific protein 2 (BRINP2) (Pongo abelii (Sumatran orangutan)).